The chain runs to 288 residues: MYEGINLITAIITPFTVNDEIDYESLEKLIEHLLNHGSQGFVIAGTTGESPTLSFEEKVELTRFIAKQVGNRALLIANAGSNNTKESVEAAKALSKIEHINGILAVTPYYNKPSQAGMIAHFKAIADASEKPVMLYNIPGRTVVGLTVDSVIELAQHPNINAIKETTSTEFVEAEVEGATGFAVYTGEDAMTLSAYTVGGAGTISVASHLYGDEMSELFSAMNAGNWREAGRLQRYLTPRMNALFAYPSPTPVKTKLAEKGFVREAVRLPLIPLSDAEKLHLNELLEK.

Threonine 47 serves as a coordination point for pyruvate. Tyrosine 136 (proton donor/acceptor) is an active-site residue. Lysine 164 serves as the catalytic Schiff-base intermediate with substrate. Isoleucine 204 is a binding site for pyruvate.

This sequence belongs to the DapA family. In terms of assembly, homotetramer; dimer of dimers.

It is found in the cytoplasm. The catalysed reaction is L-aspartate 4-semialdehyde + pyruvate = (2S,4S)-4-hydroxy-2,3,4,5-tetrahydrodipicolinate + H2O + H(+). The protein operates within amino-acid biosynthesis; L-lysine biosynthesis via DAP pathway; (S)-tetrahydrodipicolinate from L-aspartate: step 3/4. Functionally, catalyzes the condensation of (S)-aspartate-beta-semialdehyde [(S)-ASA] and pyruvate to 4-hydroxy-tetrahydrodipicolinate (HTPA). This chain is 4-hydroxy-tetrahydrodipicolinate synthase, found in Leuconostoc mesenteroides subsp. mesenteroides (strain ATCC 8293 / DSM 20343 / BCRC 11652 / CCM 1803 / JCM 6124 / NCDO 523 / NBRC 100496 / NCIMB 8023 / NCTC 12954 / NRRL B-1118 / 37Y).